A 525-amino-acid chain; its full sequence is GMP synthase [glutamine-hydrolyzing] (525 aa).

One can recognise a Glutamine amidotransferase type-1 domain in the interval 9 to 207; that stretch reads RILILDFGSQ…VLDICGCDAL (199 aa). C86 (nucleophile) is an active-site residue. Active-site residues include H181 and E183. In terms of domain architecture, GMPS ATP-PPase spans 208–400; it reads WTSAAIIEDT…LGLPYDMLYR (193 aa). Residue 235 to 241 coordinates ATP; it reads SGGVDSS.

As to quaternary structure, homodimer.

The enzyme catalyses XMP + L-glutamine + ATP + H2O = GMP + L-glutamate + AMP + diphosphate + 2 H(+). It functions in the pathway purine metabolism; GMP biosynthesis; GMP from XMP (L-Gln route): step 1/1. Functionally, catalyzes the synthesis of GMP from XMP. This chain is GMP synthase [glutamine-hydrolyzing], found in Proteus mirabilis (strain HI4320).